Reading from the N-terminus, the 442-residue chain is MSDTIAAIATAHGVGSISIVRLSGERALEFALKLSHKTKLTPRHATFTKLFNQNNEIIDEAIMIYFKAPYSFTGEDIVEFQTHGGFSVSEVLLEELVSLGARLALAGEFSKRACLNGKMTPLKALNIQDLILSKSALAAKIIARNMQGNLGELLEKIRTDLVKTLAFVETSIDYADDDLPSDLLEQISTMCEENSKILKEIYTLSQSKKGLIEGFKIAIVGKPNVGKSSLLNALLSYERAIVSDIAGTTRDTIEENFKLGTHLLRIIDTAGIRESKDVIEQIGVALSKKSLEDADIILAVFDASRVQDKEDEKIFDLLANTDKKIFWILNKSDLENVFKNTQNKNFIKLSAQKDITLLKEELQNYLNSFDSEGIMVSSLDLINACKISSEAIFRAKGLLEESSLELFAFELNLAINELARFTKDFQRDEILDEMFGNFCLGK.

(6S)-5-formyl-5,6,7,8-tetrahydrofolate is bound by residues arginine 21, glutamate 79, and lysine 118. A TrmE-type G domain is found at 214–367 (GFKIAIVGKP…LKEELQNYLN (154 aa)). Asparagine 224 provides a ligand contact to K(+). GTP-binding positions include 224–229 (NVGKSS), 243–249 (SDIAGTT), and 268–271 (DTAG). A Mg(2+)-binding site is contributed by serine 228. K(+)-binding residues include serine 243, isoleucine 245, and threonine 248. Mg(2+) is bound at residue threonine 249. Lysine 442 provides a ligand contact to (6S)-5-formyl-5,6,7,8-tetrahydrofolate.

This sequence belongs to the TRAFAC class TrmE-Era-EngA-EngB-Septin-like GTPase superfamily. TrmE GTPase family. Homodimer. Heterotetramer of two MnmE and two MnmG subunits. K(+) serves as cofactor.

It is found in the cytoplasm. In terms of biological role, exhibits a very high intrinsic GTPase hydrolysis rate. Involved in the addition of a carboxymethylaminomethyl (cmnm) group at the wobble position (U34) of certain tRNAs, forming tRNA-cmnm(5)s(2)U34. This is tRNA modification GTPase MnmE from Campylobacter jejuni subsp. jejuni serotype O:23/36 (strain 81-176).